The following is a 383-amino-acid chain: MRSSQNGGAMGGRAAGTGGGGPSAPVDKEVDYAQYFCTYSFLYHQKDMLSDRVRMDAYFNAVFQNKHHFEGKTVLDVGTGSGILAIWSAQAGARKVYAVEATKMADHARALVKANNLDHIVEVIEGSVEDISLPEKVDVIISEWMGYFLLRESMFDSVISARDRWLKPTGVMYPSHARMWLAPIKSNIADRKRNDFDGAMADWHNFSDEIKSYYGVDMGVLTKPFAEEQEKYYIQTAMWNDLNPQQIIGTPTIVKEMDCLTASVSEIEEVRSNVTSVINMEHTRLCGFGGWFDVQFSGRKEDPAQQEIELTTAPSEQHCTHWGQQVFIMSNPINVEEGDNLNLGLLMSRSKENHRLMEIELNCEIKEASGNPKESFKKTYFIE.

The interval 1 to 23 (MRSSQNGGAMGGRAAGTGGGGPS) is disordered. The span at 8–22 (GAMGGRAAGTGGGGP) shows a compositional bias: gly residues. Residues 29 to 360 (EVDYAQYFCT…KENHRLMEIE (332 aa)) form the SAM-dependent MTase PRMT-type domain. S-adenosyl-L-methionine-binding residues include Gln45, Arg54, Gly78, Glu100, and Glu129. Catalysis depends on residues Glu143 and Glu152. The segment at 190-230 (DRKRNDFDGAMADWHNFSDEIKSYYGVDMGVLTKPFAEEQE) is dimerization arm.

This sequence belongs to the class I-like SAM-binding methyltransferase superfamily. Protein arginine N-methyltransferase family. Ring-like homodimer.

It carries out the reaction L-arginyl-[protein] + 2 S-adenosyl-L-methionine = N(omega),N(omega)-dimethyl-L-arginyl-[protein] + 2 S-adenosyl-L-homocysteine + 2 H(+). In terms of biological role, methylates (mono and asymmetric dimethylation) the guanidino nitrogens of arginyl residues in some proteins. Essential for regulating flowering time. This chain is Protein arginine N-methyltransferase PRMT10 (PRMT10), found in Arabidopsis thaliana (Mouse-ear cress).